The sequence spans 3124 residues: Collagen alpha-1(XII) chain (3124 aa).

The first 23 residues, 1–23, serve as a signal peptide directing secretion; the sequence is MRTALCSAVAALCAAALLSSIEA. The region spanning 27-117 is the Fibronectin type-III 1 domain; it reads PPSDLNFTII…GQLTIQTGGP (91 aa). An N-linked (GlcNAc...) asparagine glycan is attached at Asn32. The VWFA 1 domain maps to 139–311; the sequence is DLVFLVDGSW…DGIVDIQNEI (173 aa). Ser328 carries O-linked (Xyl...) (chondroitin sulfate) serine glycosylation. The Fibronectin type-III 2 domain occupies 335–424; the sequence is PASNLVATQI…ITIMEKTQQV (90 aa). Positions 439–615 constitute a VWFA 2 domain; that stretch reads DVVFLVDGSY…RISFELTQSV (177 aa). 6 Fibronectin type-III domains span residues 633–722, 724–815, 816–906, 908–998, 999–1087, and 1089–1179; these read PAKN…LEVK, APRN…VRGN, PRNL…LEER, SPRN…VSQS, ARTV…ASPF, and PPRN…TLSD. O-linked (Xyl...) (chondroitin sulfate) serine glycans are attached at residues Ser797, Ser890, and Ser981. N-linked (GlcNAc...) asparagine glycosylation is found at Asn1006, Asn1032, and Asn1044. Positions 1075-1100 are disordered; that stretch reads KSRKAEGTTASPFKPPRNLRTSDSTM. The 173-residue stretch at 1199–1371 folds into the VWFA 3 domain; it reads DIVLLVDGSW…SFLASIGEDV (173 aa). Fibronectin type-III domains lie at 1387 to 1476, 1477 to 1568, 1569 to 1659, 1660 to 1756, 1759 to 1853, 1854 to 1939, 1940 to 2030, 2031 to 2121, 2122 to 2210, and 2211 to 2299; these read PPSN…YPLS, SVRN…LPLP, GPRG…VPSP, VNLR…TPAP, GPRN…TVKN, MLVY…LERG, TPRN…LPRS, GPRN…VGLL, PPQN…LYLN, and VTDL…LKPT. A glycan (N-linked (GlcNAc...) asparagine) is linked at Asn1512. A glycan (N-linked (GlcNAc...) asparagine) is linked at Asn1767. Asn2210 and Asn2273 each carry an N-linked (GlcNAc...) asparagine glycan. Residues 2327–2500 enclose the VWFA 4 domain; that stretch reads DIVFLTDASW…DAFEKIQDNL (174 aa). The segment at 2455–2750 is nonhelical region (NC3); that stretch reads SGFSVFVVGV…NACTCTQDSV (296 aa). The Laminin G-like domain occupies 2524–2716; the sequence is GFKMLESYNL…IQNFDIVCSP (193 aa). N-linked (GlcNAc...) asparagine glycans are attached at residues Asn2532 and Asn2683. Disordered regions lie at residues 2749 to 2900 and 2935 to 3080; these read SVGP…GDRG and PNDY…EGEP. 3 Collagen-like domains span residues 2751-2802, 2807-2858, and 2859-2900; these read GPPG…GPNG, GEPG…GPRG, and PPGP…GDRG. The interval 2751-2902 is triple-helical region (COL2) with 1 imperfection; it reads GPPGPPGPPG…KGEKGDRGDI (152 aa). 2 stretches are compositionally biased toward pro residues: residues 2752–2761 and 2788–2798; these read PPGPPGPPGG and PPGPQGPPGPQ. Residues 2821 to 2830 show a composition bias toward low complexity; it reads PGLPGRSGTP. Residues 2832 to 2841 show a composition bias toward pro residues; sequence LPGPPGPVGP. Composition is skewed to low complexity over residues 2842–2854 and 2865–2878; these read PGER…DGPT and APGV…SGKP. The short motif at 2899–2901 is the Cell attachment site element; sequence RGD. Residues 2903 to 2945 form a nonhelical region (NC2) region; that stretch reads ASQNMMRAVARQVCEQLINGQMSRFNQMLNQIPNDYYSNRNQP. A compositionally biased stretch (polar residues) spans 2935–2944; the sequence is PNDYYSNRNQ. Residues 2945 to 2954 are compositionally biased toward pro residues; sequence PGPPGPPGPP. The 50-residue stretch at 2945 to 2994 folds into the Collagen-like 4 domain; the sequence is PGPPGPPGPPGAAGTRGEPGPGGRPGFPGPPGVQGPPGERGMPGEKGERG. Residues 2946 to 3048 are triple-helical region (COL1) with 2 imperfections; that stretch reads GPPGPPGPPG…RGPPGPPGYC (103 aa). Residues 2961–2970 are compositionally biased toward gly residues; the sequence is GEPGPGGRPG. Over residues 3010-3024 the composition is skewed to low complexity; sequence QGESRTGPPGSTGSR. The segment at 3049-3124 is nonhelical region (NC1); the sequence is DSSQCASIPY…SLSRKAKRKP (76 aa).

It belongs to the fibril-associated collagens with interrupted helices (FACIT) family. Trimer of identical chains each containing 190 kDa of non-triple-helical sequences. In terms of processing, the triple-helical tail is stabilized by disulfide bonds at each end. Post-translationally, prolines at the third position of the tripeptide repeating unit (G-X-Y) are hydroxylated in some or all of the chains. O-glycosylated; glycosaminoglycan of chondroitin-sulfate type. Type XII collagen is present in tendons, ligaments, perichondrium, and periosteum, all dense connective tissues containing type I collagen.

The protein localises to the secreted. Its subcellular location is the extracellular space. The protein resides in the extracellular matrix. In terms of biological role, type XII collagen interacts with type I collagen-containing fibrils, the COL1 domain could be associated with the surface of the fibrils, and the COL2 and NC3 domains may be localized in the perifibrillar matrix. This is Collagen alpha-1(XII) chain (COL12A1) from Gallus gallus (Chicken).